Here is a 1216-residue protein sequence, read N- to C-terminus: Coatomer subunit alpha-1 (1216 aa).

8 WD repeats span residues 7-48, 49-88, 91-132, 133-172, 202-241, 246-285, 288-326, and 363-404; these read TKSN…DRFD, EHEGPVRGVHFHNSQPLFVSGGDDYKIKVWNYKNHRCLFT, GHLD…SVLT, GHNHYVMCASFHPKEDLVVSASLDQTVRVWDIGALRKKTV, GHDRGVNWAAFHPTLPLIVSGADDRQVKLWRMNETKAWEV, GHMNNVSSVMFHAKQDIIVSNSEDKSIRVWDATKRTGLQT, REHDRFWILAVHPEMNLLAAGHDSGMIVFKLERERPAFA, and SLNQ…VGRS.

Oligomeric complex that consists of at least the alpha, beta, beta', gamma, delta, epsilon and zeta subunits.

Its subcellular location is the cytoplasm. The protein localises to the golgi apparatus membrane. The protein resides in the cytoplasmic vesicle. It localises to the COPI-coated vesicle membrane. Functionally, the coatomer is a cytosolic protein complex that binds to dilysine motifs and reversibly associates with Golgi non-clathrin-coated vesicles, which further mediate biosynthetic protein transport from the ER, via the Golgi up to the trans Golgi network. Coatomer complex is required for budding from Golgi membranes, and is essential for the retrograde Golgi-to-ER transport of dilysine-tagged proteins. This is Coatomer subunit alpha-1 from Arabidopsis thaliana (Mouse-ear cress).